The sequence spans 262 residues: Adenosylcobinamide-GDP ribazoletransferase (262 aa).

The next 4 membrane-spanning stretches (helical) occupy residues 43–63 (PLAG…LGAI), 121–141 (VALI…LPLL), 145–165 (GGGV…VWHW), and 195–215 (GVIL…AVLL).

Belongs to the CobS family. Requires Mg(2+) as cofactor.

The protein localises to the cell inner membrane. It catalyses the reaction alpha-ribazole + adenosylcob(III)inamide-GDP = adenosylcob(III)alamin + GMP + H(+). The catalysed reaction is alpha-ribazole 5'-phosphate + adenosylcob(III)inamide-GDP = adenosylcob(III)alamin 5'-phosphate + GMP + H(+). It participates in cofactor biosynthesis; adenosylcobalamin biosynthesis; adenosylcobalamin from cob(II)yrinate a,c-diamide: step 7/7. Functionally, joins adenosylcobinamide-GDP and alpha-ribazole to generate adenosylcobalamin (Ado-cobalamin). Also synthesizes adenosylcobalamin 5'-phosphate from adenosylcobinamide-GDP and alpha-ribazole 5'-phosphate. The protein is Adenosylcobinamide-GDP ribazoletransferase of Sinorhizobium medicae (strain WSM419) (Ensifer medicae).